A 224-amino-acid chain; its full sequence is 7-cyano-7-deazaguanine synthase (224 aa).

Residue 8 to 18 participates in ATP binding; sequence LSGGMDSAAVI. 4 residues coordinate Zn(2+): Cys186, Cys196, Cys199, and Cys202.

It belongs to the QueC family. Zn(2+) serves as cofactor.

The catalysed reaction is 7-carboxy-7-deazaguanine + NH4(+) + ATP = 7-cyano-7-deazaguanine + ADP + phosphate + H2O + H(+). It functions in the pathway purine metabolism; 7-cyano-7-deazaguanine biosynthesis. Functionally, catalyzes the ATP-dependent conversion of 7-carboxy-7-deazaguanine (CDG) to 7-cyano-7-deazaguanine (preQ(0)). The chain is 7-cyano-7-deazaguanine synthase from Xanthomonas oryzae pv. oryzae (strain MAFF 311018).